A 1254-amino-acid polypeptide reads, in one-letter code: DNA-directed RNA polymerase subunit beta' (1254 aa).

Zn(2+) contacts are provided by Cys-59, Cys-61, Cys-76, and Cys-79. Residues Asp-501, Asp-503, and Asp-505 each contribute to the Mg(2+) site. Cys-871, Cys-946, Cys-953, and Cys-956 together coordinate Zn(2+).

Belongs to the RNA polymerase beta' chain family. In terms of assembly, the RNAP catalytic core consists of 2 alpha, 1 beta, 1 beta' and 1 omega subunit. When a sigma factor is associated with the core the holoenzyme is formed, which can initiate transcription. Mg(2+) is required as a cofactor. The cofactor is Zn(2+).

The catalysed reaction is RNA(n) + a ribonucleoside 5'-triphosphate = RNA(n+1) + diphosphate. In terms of biological role, DNA-dependent RNA polymerase catalyzes the transcription of DNA into RNA using the four ribonucleoside triphosphates as substrates. The protein is DNA-directed RNA polymerase subunit beta' of Mesoplasma florum (strain ATCC 33453 / NBRC 100688 / NCTC 11704 / L1) (Acholeplasma florum).